The primary structure comprises 1211 residues: DNA-directed RNA polymerase subunit beta' (1211 aa).

Zn(2+) is bound by residues cysteine 60, cysteine 62, cysteine 75, and cysteine 78. The Mg(2+) site is built by aspartate 449, aspartate 451, and aspartate 453. Zn(2+) is bound by residues cysteine 818, cysteine 892, cysteine 899, and cysteine 902.

It belongs to the RNA polymerase beta' chain family. In terms of assembly, the RNAP catalytic core consists of 2 alpha, 1 beta, 1 beta' and 1 omega subunit. When a sigma factor is associated with the core the holoenzyme is formed, which can initiate transcription. Mg(2+) is required as a cofactor. Zn(2+) serves as cofactor.

It carries out the reaction RNA(n) + a ribonucleoside 5'-triphosphate = RNA(n+1) + diphosphate. DNA-dependent RNA polymerase catalyzes the transcription of DNA into RNA using the four ribonucleoside triphosphates as substrates. The polypeptide is DNA-directed RNA polymerase subunit beta' (Limosilactobacillus reuteri (strain DSM 20016) (Lactobacillus reuteri)).